We begin with the raw amino-acid sequence, 130 residues long: uncharacterized protein (130 aa).

The first 18 residues, 1–18 (MVEVWWSLIGAAVPALIA), serve as a signal peptide directing secretion.

This is an uncharacterized protein from Arabidopsis thaliana (Mouse-ear cress).